Here is a 456-residue protein sequence, read N- to C-terminus: tRNA modification GTPase MnmE (456 aa).

The (6S)-5-formyl-5,6,7,8-tetrahydrofolate site is built by Arg24, Glu81, and Lys120. Positions 216–379 constitute a TrmE-type G domain; sequence GMTVVIAGRP…LRDHLKACMG (164 aa). K(+) is bound at residue Asn226. GTP-binding positions include 226 to 231, 245 to 251, 270 to 273, 335 to 338, and 359 to 361; these read NAGKSS, TDIAGTT, DTAG, NKAD, and SAR. Ser230 lines the Mg(2+) pocket. 3 residues coordinate K(+): Thr245, Ile247, and Thr250. Thr251 is a binding site for Mg(2+). A (6S)-5-formyl-5,6,7,8-tetrahydrofolate-binding site is contributed by Lys456.

This sequence belongs to the TRAFAC class TrmE-Era-EngA-EngB-Septin-like GTPase superfamily. TrmE GTPase family. As to quaternary structure, homodimer. Heterotetramer of two MnmE and two MnmG subunits. K(+) serves as cofactor.

It is found in the cytoplasm. Exhibits a very high intrinsic GTPase hydrolysis rate. Involved in the addition of a carboxymethylaminomethyl (cmnm) group at the wobble position (U34) of certain tRNAs, forming tRNA-cmnm(5)s(2)U34. This chain is tRNA modification GTPase MnmE, found in Pseudomonas entomophila (strain L48).